The sequence spans 250 residues: 3-deoxy-manno-octulosonate cytidylyltransferase (250 aa).

It belongs to the KdsB family.

It localises to the cytoplasm. It carries out the reaction 3-deoxy-alpha-D-manno-oct-2-ulosonate + CTP = CMP-3-deoxy-beta-D-manno-octulosonate + diphosphate. It participates in nucleotide-sugar biosynthesis; CMP-3-deoxy-D-manno-octulosonate biosynthesis; CMP-3-deoxy-D-manno-octulosonate from 3-deoxy-D-manno-octulosonate and CTP: step 1/1. The protein operates within bacterial outer membrane biogenesis; lipopolysaccharide biosynthesis. Its function is as follows. Activates KDO (a required 8-carbon sugar) for incorporation into bacterial lipopolysaccharide in Gram-negative bacteria. The polypeptide is 3-deoxy-manno-octulosonate cytidylyltransferase (Cytophaga hutchinsonii (strain ATCC 33406 / DSM 1761 / CIP 103989 / NBRC 15051 / NCIMB 9469 / D465)).